The chain runs to 645 residues: Ethylene response sensor 2 (645 aa).

4 helical membrane-spanning segments follow: residues 5–25 (LLVQWLVFFFFFLIGSVVTAA), 54–74 (VGDFLIAIAYFSIPIELVYFV), 86–106 (VVCEFIAFIVLCGMTHLLAGF), and 125–145 (LTGIVSFLTALSLVTLLPLLL). C97 and H101 together coordinate Cu cation. The region spanning 190–346 (DRHTILYTTL…VVADQVAVAI (157 aa)) is the GAF domain. In terms of domain architecture, Histidine kinase spans 389–623 (MMSDAMRCPV…VFRFQLRRSM (235 aa)).

Belongs to the ethylene receptor family. In terms of assembly, heteromer with ETR1. The cofactor is Cu cation. In terms of processing, autophosphorylated predominantly on Ser residues. In terms of tissue distribution, expressed in etiolated seedlings, leaves, roots and stems. Highly expressed in flowers, stamens, pollen cells, tapetum cells, carpels and ovules.

The protein resides in the endoplasmic reticulum membrane. Ethylene receptor related to bacterial two-component regulators. Acts as a redundant negative regulator of ethylene signaling. This is Ethylene response sensor 2 (ERS2) from Arabidopsis thaliana (Mouse-ear cress).